The chain runs to 356 residues: GTPase Obg (356 aa).

Residues 1 to 159 (MKFLDEAKVY…RWIWLRMKLI (159 aa)) form the Obg domain. Positions 160–327 (ADAGLVGLPN…VLRALTDVIS (168 aa)) constitute an OBG-type G domain. GTP-binding positions include 166 to 173 (GLPNAGKS), 191 to 195 (FTTLH), 212 to 215 (DIPG), 279 to 282 (NKID), and 308 to 310 (SGV). Residues Ser173 and Thr193 each contribute to the Mg(2+) site. The interval 329-356 (APVSTKAKGEPTENETPPPSTGWSPLSN) is disordered.

This sequence belongs to the TRAFAC class OBG-HflX-like GTPase superfamily. OBG GTPase family. Monomer. The cofactor is Mg(2+).

It is found in the cytoplasm. Functionally, an essential GTPase which binds GTP, GDP and possibly (p)ppGpp with moderate affinity, with high nucleotide exchange rates and a fairly low GTP hydrolysis rate. Plays a role in control of the cell cycle, stress response, ribosome biogenesis and in those bacteria that undergo differentiation, in morphogenesis control. The polypeptide is GTPase Obg (Afipia carboxidovorans (strain ATCC 49405 / DSM 1227 / KCTC 32145 / OM5) (Oligotropha carboxidovorans)).